Here is a 319-residue protein sequence, read N- to C-terminus: Acetyl-coenzyme A carboxylase carboxyl transferase subunit alpha (319 aa).

Residues 32–293 (NVDTEVRALE…KAVLLNELEA (262 aa)) form the CoA carboxyltransferase C-terminal domain.

Belongs to the AccA family. As to quaternary structure, acetyl-CoA carboxylase is a heterohexamer composed of biotin carboxyl carrier protein (AccB), biotin carboxylase (AccC) and two subunits each of ACCase subunit alpha (AccA) and ACCase subunit beta (AccD).

Its subcellular location is the cytoplasm. The enzyme catalyses N(6)-carboxybiotinyl-L-lysyl-[protein] + acetyl-CoA = N(6)-biotinyl-L-lysyl-[protein] + malonyl-CoA. Its pathway is lipid metabolism; malonyl-CoA biosynthesis; malonyl-CoA from acetyl-CoA: step 1/1. Component of the acetyl coenzyme A carboxylase (ACC) complex. First, biotin carboxylase catalyzes the carboxylation of biotin on its carrier protein (BCCP) and then the CO(2) group is transferred by the carboxyltransferase to acetyl-CoA to form malonyl-CoA. The protein is Acetyl-coenzyme A carboxylase carboxyl transferase subunit alpha of Xylella fastidiosa (strain 9a5c).